A 531-amino-acid polypeptide reads, in one-letter code: Pescadillo homolog (531 aa).

The BRCT domain maps to 309 to 398 (SIKTMFKGCV…RKLPTERYMP (90 aa)).

The protein belongs to the pescadillo family.

The protein resides in the nucleus. It localises to the nucleolus. Its subcellular location is the nucleoplasm. Its function is as follows. Required for maturation of ribosomal RNAs and formation of the large ribosomal subunit. The chain is Pescadillo homolog from Caenorhabditis elegans.